A 100-amino-acid polypeptide reads, in one-letter code: Urease subunit gamma (100 aa).

Belongs to the urease gamma subunit family. In terms of assembly, heterotrimer of UreA (gamma), UreB (beta) and UreC (alpha) subunits. Three heterotrimers associate to form the active enzyme.

The protein localises to the cytoplasm. It carries out the reaction urea + 2 H2O + H(+) = hydrogencarbonate + 2 NH4(+). It functions in the pathway nitrogen metabolism; urea degradation; CO(2) and NH(3) from urea (urease route): step 1/1. This Alcanivorax borkumensis (strain ATCC 700651 / DSM 11573 / NCIMB 13689 / SK2) protein is Urease subunit gamma.